Reading from the N-terminus, the 213-residue chain is PRA1 family protein B2 (213 aa).

The interval 1-21 (MSSSPAILPVTNQQAATQSQP) is disordered. The next 5 membrane-spanning stretches (helical) occupy residues 75 to 94 (LAYF…AFSL), 98 to 117 (PFSL…LYLF), 137 to 157 (LLGL…GSLL), 161 to 181 (LTIG…DDLF), and 190 to 210 (AGLL…SVVA).

Belongs to the PRA1 family. In terms of assembly, interacts with PRA1B1, PRA1B3, PRA1B4, PRA1B5, PRA1B6 and PRA1E.

The protein resides in the endosome membrane. In terms of biological role, may be involved in both secretory and endocytic intracellular trafficking in the endosomal/prevacuolar compartments. In Arabidopsis thaliana (Mouse-ear cress), this protein is PRA1 family protein B2 (PRA1B2).